Here is a 409-residue protein sequence, read N- to C-terminus: MSEEAPPEDDSYIVRVKAVVMSRDDSSGGWLPHEGGGLSRVGVSKVYPEGSGRSNFLIHGERLNDKLVLLECYLKKDLVYWKATPTFHHWLVDNRRFGLTFQSPADARAFDRGVRKAIEDLTEGSTTSSSTIHNEAELGDDDVFATSTDSSSNSSQKREPPVRTIASPLPGGHCRYSTLSNIDLPGFEHYPTEQSCARPHRHVSFPDDDDEIVRINPRERNWLTGYEDYRQAPIHRKYPDTESIDSYVRFAKSESTKHDYNYPYVDHTNFGISKDLKTSVINTQPSRCSSRRKDGERSRCIYCRDMFNHDENRRGQCQDAPDSVRNCIRRVSCMGFADCVLYHCMSDSEGDYTDACSCDTSDEKFCLRWMLLIPLSIIAPGMCCYLPLRACYNCGVMCGCCGGKHKAAG.

The WH1 domain maps to 5-121 (APPEDDSYIV…RGVRKAIEDL (117 aa)). The disordered stretch occupies residues 121-170 (LTEGSTTSSSTIHNEAELGDDDVFATSTDSSSNSSQKREPPVRTIASPLP). Over residues 123–133 (EGSTTSSSTIH) the composition is skewed to polar residues. Low complexity predominate over residues 146–155 (TSTDSSSNSS). Residues 199–253 (PHRHVSFPDDDDEIVRINPRERNWLTGYEDYRQAPIHRKYPDTESIDSYVRFAKS) enclose the KBD domain. Residues 299 to 407 (RCIYCRDMFN…CGCCGGKHKA (109 aa)) enclose the SPR domain.

It localises to the cell membrane. Its subcellular location is the cytoplasmic vesicle. The protein resides in the secretory vesicle membrane. The protein localises to the cytoplasm. Functionally, negatively regulates Ras signaling pathways and downstream activation of MAP kinases. The protein is Sprouty-related, EVH1 domain-containing protein 2 (spred2) of Xenopus tropicalis (Western clawed frog).